The primary structure comprises 81 residues: Photosystem I iron-sulfur center (81 aa).

4Fe-4S ferredoxin-type domains lie at 2–31 (SHTV…MAPW) and 39–68 (VASA…VRVY). Positions 11, 14, 17, 21, 48, 51, 54, and 58 each coordinate [4Fe-4S] cluster.

The eukaryotic PSI reaction center is composed of at least 11 subunits. It depends on [4Fe-4S] cluster as a cofactor.

The protein resides in the plastid. Its subcellular location is the chloroplast thylakoid membrane. The catalysed reaction is reduced [plastocyanin] + hnu + oxidized [2Fe-2S]-[ferredoxin] = oxidized [plastocyanin] + reduced [2Fe-2S]-[ferredoxin]. In terms of biological role, apoprotein for the two 4Fe-4S centers FA and FB of photosystem I (PSI); essential for photochemical activity. FB is the terminal electron acceptor of PSI, donating electrons to ferredoxin. The C-terminus interacts with PsaA/B/D and helps assemble the protein into the PSI complex. Required for binding of PsaD and PsaE to PSI. PSI is a plastocyanin/cytochrome c6-ferredoxin oxidoreductase, converting photonic excitation into a charge separation, which transfers an electron from the donor P700 chlorophyll pair to the spectroscopically characterized acceptors A0, A1, FX, FA and FB in turn. This Tupiella akineta (Green alga) protein is Photosystem I iron-sulfur center.